A 59-amino-acid chain; its full sequence is uncharacterized protein (59 aa).

The next 2 membrane-spanning stretches (helical) occupy residues 1–21 (MNMYWFLGALLYFLIGTYIFI) and 30–50 (GSWILLALAAPLIIAGYPYFY).

It is found in the cell membrane. This is an uncharacterized protein from Bacillus subtilis (strain 168).